Consider the following 83-residue polypeptide: Sec-independent protein translocase protein TatA (83 aa).

Residues 2–22 form a helical membrane-spanning segment; the sequence is GLGGISIWQLLIVLVIVLLLF. 2 stretches are compositionally biased toward basic and acidic residues: residues 50 to 65 and 74 to 83; these read AAKQEAEEAEQKKVAA and AEQKEKTEAK. The tract at residues 50 to 83 is disordered; it reads AAKQEAEEAEQKKVAAEEAAAAKTAEQKEKTEAK.

It belongs to the TatA/E family. The Tat system comprises two distinct complexes: a TatABC complex, containing multiple copies of TatA, TatB and TatC subunits, and a separate TatA complex, containing only TatA subunits. Substrates initially bind to the TatABC complex, which probably triggers association of the separate TatA complex to form the active translocon.

It is found in the cell inner membrane. Functionally, part of the twin-arginine translocation (Tat) system that transports large folded proteins containing a characteristic twin-arginine motif in their signal peptide across membranes. TatA could form the protein-conducting channel of the Tat system. The polypeptide is Sec-independent protein translocase protein TatA (Saccharophagus degradans (strain 2-40 / ATCC 43961 / DSM 17024)).